Reading from the N-terminus, the 502-residue chain is ATP synthase subunit alpha (502 aa).

169–176 lines the ATP pocket; it reads GDRQTGKT.

This sequence belongs to the ATPase alpha/beta chains family. In terms of assembly, F-type ATPases have 2 components, CF(1) - the catalytic core - and CF(0) - the membrane proton channel. CF(1) has five subunits: alpha(3), beta(3), gamma(1), delta(1), epsilon(1). CF(0) has three main subunits: a(1), b(2) and c(9-12). The alpha and beta chains form an alternating ring which encloses part of the gamma chain. CF(1) is attached to CF(0) by a central stalk formed by the gamma and epsilon chains, while a peripheral stalk is formed by the delta and b chains.

It localises to the cell inner membrane. The enzyme catalyses ATP + H2O + 4 H(+)(in) = ADP + phosphate + 5 H(+)(out). Functionally, produces ATP from ADP in the presence of a proton gradient across the membrane. The alpha chain is a regulatory subunit. The polypeptide is ATP synthase subunit alpha (Kosmotoga olearia (strain ATCC BAA-1733 / DSM 21960 / TBF 19.5.1)).